We begin with the raw amino-acid sequence, 172 residues long: Small ribosomal subunit protein uS5 (172 aa).

Residues 17–80 (LKEKMIAINR…EEARRNMTKV (64 aa)) form the S5 DRBM domain.

This sequence belongs to the universal ribosomal protein uS5 family. In terms of assembly, part of the 30S ribosomal subunit. Contacts proteins S4 and S8.

Functionally, with S4 and S12 plays an important role in translational accuracy. In terms of biological role, located at the back of the 30S subunit body where it stabilizes the conformation of the head with respect to the body. The sequence is that of Small ribosomal subunit protein uS5 from Polaromonas naphthalenivorans (strain CJ2).